Here is a 211-residue protein sequence, read N- to C-terminus: Large ribosomal subunit protein bL25 (211 aa).

The interval 175-211 (VSEPVEQDLGEESETEEEGAEGEKPAESTGEEPGDDE) is disordered. A compositionally biased stretch (acidic residues) spans 179 to 194 (VEQDLGEESETEEEGA).

Belongs to the bacterial ribosomal protein bL25 family. CTC subfamily. In terms of assembly, part of the 50S ribosomal subunit; part of the 5S rRNA/L5/L18/L25 subcomplex. Contacts the 5S rRNA. Binds to the 5S rRNA independently of L5 and L18.

This is one of the proteins that binds to the 5S RNA in the ribosome where it forms part of the central protuberance. The chain is Large ribosomal subunit protein bL25 from Kocuria rhizophila (strain ATCC 9341 / DSM 348 / NBRC 103217 / DC2201).